A 378-amino-acid polypeptide reads, in one-letter code: UDP-N-acetylglucosamine--N-acetylmuramyl-(pentapeptide) pyrophosphoryl-undecaprenol N-acetylglucosamine transferase (378 aa).

UDP-N-acetyl-alpha-D-glucosamine contacts are provided by residues 24 to 26, Asn144, Arg181, Ser215, and Gln310; that span reads TAG.

Belongs to the glycosyltransferase 28 family. MurG subfamily.

It is found in the cell membrane. It catalyses the reaction di-trans,octa-cis-undecaprenyl diphospho-N-acetyl-alpha-D-muramoyl-L-alanyl-D-glutamyl-meso-2,6-diaminopimeloyl-D-alanyl-D-alanine + UDP-N-acetyl-alpha-D-glucosamine = di-trans,octa-cis-undecaprenyl diphospho-[N-acetyl-alpha-D-glucosaminyl-(1-&gt;4)]-N-acetyl-alpha-D-muramoyl-L-alanyl-D-glutamyl-meso-2,6-diaminopimeloyl-D-alanyl-D-alanine + UDP + H(+). It participates in cell wall biogenesis; peptidoglycan biosynthesis. Its function is as follows. Cell wall formation. Catalyzes the transfer of a GlcNAc subunit on undecaprenyl-pyrophosphoryl-MurNAc-pentapeptide (lipid intermediate I) to form undecaprenyl-pyrophosphoryl-MurNAc-(pentapeptide)GlcNAc (lipid intermediate II). This is UDP-N-acetylglucosamine--N-acetylmuramyl-(pentapeptide) pyrophosphoryl-undecaprenol N-acetylglucosamine transferase from Nocardia farcinica (strain IFM 10152).